Consider the following 357-residue polypeptide: DNA integrity scanning protein DisA (357 aa).

A DAC domain is found at 8–146; sequence VKSMINILQL…GNLRYTLKDI (139 aa). ATP is bound by residues G75, L93, and 106–110; that span reads MRHRT.

This sequence belongs to the DisA family. Homooctamer. It depends on Mg(2+) as a cofactor.

It catalyses the reaction 2 ATP = 3',3'-c-di-AMP + 2 diphosphate. In terms of biological role, participates in a DNA-damage check-point that is active prior to asymmetric division when DNA is damaged. DisA forms globular foci that rapidly scan along the chromosomes during sporulation, searching for lesions. When a lesion is present, DisA pauses at the lesion site. This triggers a cellular response that culminates in a temporary block in sporulation initiation. Functionally, also has diadenylate cyclase activity, catalyzing the condensation of 2 ATP molecules into cyclic di-AMP (c-di-AMP). c-di-AMP acts as a signaling molecule that couples DNA integrity with progression of sporulation. The rise in c-di-AMP level generated by DisA while scanning the chromosome, operates as a positive signal that advances sporulation; upon encountering a lesion, the DisA focus arrests at the damaged site and halts c-di-AMP synthesis. In Bacillus anthracis (strain CDC 684 / NRRL 3495), this protein is DNA integrity scanning protein DisA.